Here is a 737-residue protein sequence, read N- to C-terminus: Catalase-peroxidase (737 aa).

Residues 1 to 33 (MPEATEHPPIGEAQTEPAQSGCPMVIKPPVEGG) are disordered. A cross-link (tryptophyl-tyrosyl-methioninium (Trp-Tyr) (with M-261)) is located at residues 107 to 235 (WHAAGTYRVQ…LGASHMGLIY (129 aa)). His-108 serves as the catalytic Proton acceptor. Positions 235–261 (YVNPEGPEGNPDPIAAAIDIRETFGRM) form a cross-link, tryptophyl-tyrosyl-methioninium (Tyr-Met) (with W-107). His-276 is a heme binding site.

Belongs to the peroxidase family. Peroxidase/catalase subfamily. In terms of assembly, homodimer or homotetramer. Heme b is required as a cofactor. In terms of processing, formation of the three residue Trp-Tyr-Met cross-link is important for the catalase, but not the peroxidase activity of the enzyme.

The enzyme catalyses H2O2 + AH2 = A + 2 H2O. The catalysed reaction is 2 H2O2 = O2 + 2 H2O. Functionally, bifunctional enzyme with both catalase and broad-spectrum peroxidase activity. May play a role in polycyclic aromatic hydrocarbon (PAH) metabolism. The chain is Catalase-peroxidase from Mycolicibacterium vanbaalenii (Mycobacterium vanbaalenii).